The following is a 321-amino-acid chain: p-hydroxybenzoic acid efflux pump subunit AaeA (321 aa).

Residues 22–42 (VVITLVIVLCAIVAIFRVWAF) form a helical membrane-spanning segment.

This sequence belongs to the membrane fusion protein (MFP) (TC 8.A.1) family.

Its subcellular location is the cell inner membrane. Functionally, forms an efflux pump with AaeB. The sequence is that of p-hydroxybenzoic acid efflux pump subunit AaeA from Pectobacterium atrosepticum (strain SCRI 1043 / ATCC BAA-672) (Erwinia carotovora subsp. atroseptica).